A 308-amino-acid polypeptide reads, in one-letter code: D-alanine--D-alanine ligase (308 aa).

Positions 109–302 constitute an ATP-grasp domain; it reads KAAYAAAGLP…FGALCRWIVE (194 aa). An ATP-binding site is contributed by 136 to 186; the sequence is MPPPYVIKPYNEGSSVGVYLVPEGAEAAPELADDLPDTLMVEAFVPGRELT. 3 residues coordinate Mg(2+): Asp-253, Glu-269, and Asn-271.

The protein belongs to the D-alanine--D-alanine ligase family. The cofactor is Mg(2+). Requires Mn(2+) as cofactor.

It localises to the cytoplasm. The enzyme catalyses 2 D-alanine + ATP = D-alanyl-D-alanine + ADP + phosphate + H(+). The protein operates within cell wall biogenesis; peptidoglycan biosynthesis. Its function is as follows. Cell wall formation. This Dinoroseobacter shibae (strain DSM 16493 / NCIMB 14021 / DFL 12) protein is D-alanine--D-alanine ligase.